A 358-amino-acid chain; its full sequence is Chondroadherin (358 aa).

Positions 1–20 (MARVLLLSLVFLAILLPALA) are cleaved as a signal peptide. Residues 21 to 50 (ACPQNCHCHGDLQHVICDKVGLQKIPKVSE) form the LRRNT domain. An intrachain disulfide couples cysteine 22 to cysteine 37. LRR repeat units follow at residues 51–72 (TTKL…SFRT), 75–96 (NLVS…AFRG), 99–120 (QLIY…AFDD), 123–144 (ELTY…LLSP), 147–168 (NLFI…AFQG), 171–192 (DLRW…SLDD), 195–216 (NLAK…ALSK), 219–240 (VVEE…AFQS), 244–265 (YLET…AFAG), and 268–289 (TLKH…FPFD). Serine 143 carries an O-linked (GalNAc...) serine glycan. The LRRCT domain occupies 299 to 347 (NPWKCTCQLRGLRRWLEAKTSRPDATCSSPAKFKGQRIRDTDALRSCKS). Intrachain disulfides connect cysteine 303-cysteine 345 and cysteine 305-cysteine 325. The disordered stretch occupies residues 321-358 (PDATCSSPAKFKGQRIRDTDALRSCKSPTKRSKKAGRH). The segment covering 348–358 (PTKRSKKAGRH) has biased composition (basic residues).

It belongs to the small leucine-rich proteoglycan (SLRP) family. SLRP class IV subfamily. Mostly monomeric. Present in femoral head and rib cartilage, as well as in tendon. Detected in bone marrow.

The protein resides in the secreted. Its subcellular location is the extracellular space. It localises to the extracellular matrix. Its function is as follows. Promotes attachment of chondrocytes, fibroblasts, and osteoblasts. This binding is mediated (at least for chondrocytes and fibroblasts) by the integrin alpha(2)beta(1). May play an important role in the regulation of chondrocyte growth and proliferation. This chain is Chondroadherin (Chad), found in Rattus norvegicus (Rat).